A 444-amino-acid chain; its full sequence is MNRYKIGLISLGCDKNRIDSELLLGKLNEKNDIVNDPNKADIIIVNTCGFIESSKQESIDTILEMAKYKEENCKMIIATGCLTQRYSKELLELIPEIDIMLGVNDYANIQNYIDDFFNEHNKICQCKYSDISINEGKRILTTAKHMAYIRISEGCNNLCTYCIIPKIRGKYRSRSIESIINEAKELANMGVKELILVGQDTAIYGSDLYKENRLSQLLRELSNIEDIEWIRILYTYPEEITDELIEEIKNNDKVCKYLDIPIQHISNTVLKRMNRKSSKELITDNIKKMRKEIDGLCLRTSIIVGFPGETEDEFNELKEFVEEIKFDNLGVFKYSQEEDTAAARMKDQVSEDLKEERLATIMSIQQNVSSKINKNKLEKVYKVLVEGQNDKYYIGRNYQMVPEIDGAIFFKCDKILNVGEFVYVKITDTLEYDLIGVVCDESGQ.

The MTTase N-terminal domain maps to 4–118 (YKIGLISLGC…IQNYIDDFFN (115 aa)). Residues cysteine 13, cysteine 48, cysteine 81, cysteine 155, cysteine 159, and cysteine 162 each contribute to the [4Fe-4S] cluster site. Residues 141–371 (TTAKHMAYIR…MSIQQNVSSK (231 aa)) form the Radical SAM core domain. Positions 374–440 (KNKLEKVYKV…EYDLIGVVCD (67 aa)) constitute a TRAM domain.

The protein belongs to the methylthiotransferase family. RimO subfamily. The cofactor is [4Fe-4S] cluster.

It localises to the cytoplasm. It carries out the reaction L-aspartate(89)-[ribosomal protein uS12]-hydrogen + (sulfur carrier)-SH + AH2 + 2 S-adenosyl-L-methionine = 3-methylsulfanyl-L-aspartate(89)-[ribosomal protein uS12]-hydrogen + (sulfur carrier)-H + 5'-deoxyadenosine + L-methionine + A + S-adenosyl-L-homocysteine + 2 H(+). Functionally, catalyzes the methylthiolation of an aspartic acid residue of ribosomal protein uS12. This chain is Ribosomal protein uS12 methylthiotransferase RimO, found in Clostridium novyi (strain NT).